Here is a 468-residue protein sequence, read N- to C-terminus: Na(+)/H(+) antiporter NhaA 2 (468 aa).

11 consecutive transmembrane segments (helical) span residues 31-51 (FLHVQAASGIVLLIATAVALA), 82-102 (LHFWINDGLMTIFFFVVGLEI), 118-138 (VLPVAAALGGMLFPALIYLAL), 147-167 (GWGVPMATDIAFAVGALALLG), 176-196 (VLLLALAIIDDIGAILVIAVF), 199-219 (SSISVTGFGLVAVGIAGVLAL), 226-246 (SPVVYAAAGVVIWAGLLSAGV), 321-341 (PWVAYGIMPLFALANAGVSLG), 353-373 (LLLGVVFGLTMGKPLGIMVAC), 393-413 (VLVVGCVAGIGFTMAIFVAGL), and 422-442 (GVAKLAVLLGSLISALVAMAV).

Belongs to the NhaA Na(+)/H(+) (TC 2.A.33) antiporter family.

It is found in the cell inner membrane. It catalyses the reaction Na(+)(in) + 2 H(+)(out) = Na(+)(out) + 2 H(+)(in). Its function is as follows. Na(+)/H(+) antiporter that extrudes sodium in exchange for external protons. In Sorangium cellulosum (strain So ce56) (Polyangium cellulosum (strain So ce56)), this protein is Na(+)/H(+) antiporter NhaA 2.